Reading from the N-terminus, the 142-residue chain is Galactose-6-phosphate isomerase subunit LacA (142 aa).

It belongs to the LacAB/RpiB family. As to quaternary structure, heteromultimeric protein consisting of LacA and LacB.

It catalyses the reaction aldehydo-D-galactose 6-phosphate = keto-D-tagatose 6-phosphate. Its pathway is carbohydrate metabolism; D-galactose 6-phosphate degradation; D-tagatose 6-phosphate from D-galactose 6-phosphate: step 1/1. The protein is Galactose-6-phosphate isomerase subunit LacA of Streptococcus mutans serotype c (strain ATCC 700610 / UA159).